Here is a 493-residue protein sequence, read N- to C-terminus: Galactose-1-phosphate uridylyltransferase (493 aa).

It belongs to the galactose-1-phosphate uridylyltransferase type 2 family.

The protein resides in the cytoplasm. It carries out the reaction alpha-D-galactose 1-phosphate + UDP-alpha-D-glucose = alpha-D-glucose 1-phosphate + UDP-alpha-D-galactose. Its pathway is carbohydrate metabolism; galactose metabolism. This chain is Galactose-1-phosphate uridylyltransferase, found in Streptococcus pneumoniae serotype 19F (strain G54).